The primary structure comprises 62 residues: MAKVCYFTGRKTVSGNNRSHAMNQTKRTVKPNLQKVTILVDGKPKKVWASARALKSGKVERV.

The protein belongs to the bacterial ribosomal protein bL28 family.

In Streptococcus uberis (strain ATCC BAA-854 / 0140J), this protein is Large ribosomal subunit protein bL28.